The sequence spans 143 residues: Large ribosomal subunit protein uL15 (143 aa).

The tract at residues 1 to 48 (MRLNTISPSKGAKHSSKRLGRGIGSGLGKTSGRGHKGQKARSGCSIHR) is disordered. The span at 11-20 (GAKHSSKRLG) shows a compositional bias: basic residues. Gly residues predominate over residues 21 to 31 (RGIGSGLGKTS).

This sequence belongs to the universal ribosomal protein uL15 family. As to quaternary structure, part of the 50S ribosomal subunit.

In terms of biological role, binds to the 23S rRNA. This chain is Large ribosomal subunit protein uL15, found in Baumannia cicadellinicola subsp. Homalodisca coagulata.